Reading from the N-terminus, the 412-residue chain is Serine hydroxymethyltransferase (412 aa).

(6S)-5,6,7,8-tetrahydrofolate-binding positions include Leu117 and 121–123; that span reads GHL. Lys226 carries the N6-(pyridoxal phosphate)lysine modification.

It belongs to the SHMT family. Homodimer. It depends on pyridoxal 5'-phosphate as a cofactor.

It is found in the cytoplasm. The enzyme catalyses (6R)-5,10-methylene-5,6,7,8-tetrahydrofolate + glycine + H2O = (6S)-5,6,7,8-tetrahydrofolate + L-serine. It functions in the pathway one-carbon metabolism; tetrahydrofolate interconversion. It participates in amino-acid biosynthesis; glycine biosynthesis; glycine from L-serine: step 1/1. In terms of biological role, catalyzes the reversible interconversion of serine and glycine with tetrahydrofolate (THF) serving as the one-carbon carrier. This reaction serves as the major source of one-carbon groups required for the biosynthesis of purines, thymidylate, methionine, and other important biomolecules. Also exhibits THF-independent aldolase activity toward beta-hydroxyamino acids, producing glycine and aldehydes, via a retro-aldol mechanism. In Staphylococcus aureus (strain USA300), this protein is Serine hydroxymethyltransferase.